We begin with the raw amino-acid sequence, 849 residues long: Disks large homolog 3 (849 aa).

Residues 32-101 (DWQVPDPYGP…GKSTPKLNGS (70 aa)) form a disordered region. Residues 41 to 53 (PSGGNGASSGYGG) are compositionally biased toward gly residues. Residues 57-69 (QTLPSQAGATPTP) are compositionally biased toward polar residues. 3 PDZ domains span residues 149–235 (EIVL…VRRR), 244–330 (EVNL…VAKP), and 404–484 (KIIL…AQYR). Ser-157 carries the post-translational modification Phosphoserine. In terms of domain architecture, SH3 spans 519 to 589 (KRSLYVRALF…PSKKRVEKKE (71 aa)). In terms of domain architecture, Guanylate kinase-like spans 659–834 (ARPVIILGPM…IYNKIKQIIE (176 aa)). Tyr-705 carries the phosphotyrosine modification.

This sequence belongs to the MAGUK family. In terms of assembly, interacts through its PDZ domains with NETO1, GRIN2B, SYNGAP1 and APC. Interacts through its first two PDZ domains with ERBB4. Interacts through its third PDZ domain with NLGN1, and probably with NLGN2 and NLGN3. Interacts through its guanylate kinase-like domain with DLGAP1, DLGAP2, DLGAP3 and DLGAP4. Interacts with FRMPD4 (via C-terminus). Interacts with LRFN1, LRFN2 and LRFN4. Interacts with FLTP. Interacts with GPR85. Interacts with DGKI (via PDZ-binding motif).

Functionally, required for learning most likely through its role in synaptic plasticity following NMDA receptor signaling. The chain is Disks large homolog 3 (Dlg3) from Mus musculus (Mouse).